Here is a 221-residue protein sequence, read N- to C-terminus: GTP cyclohydrolase-2 (221 aa).

Position 63-67 (63-67 (RLHSE)) interacts with GTP. Zn(2+) is bound by residues cysteine 68, cysteine 79, and cysteine 81. GTP is bound by residues glutamine 84, 107-109 (EGR), and threonine 129. Residue aspartate 141 is the Proton acceptor of the active site. The active-site Nucleophile is the arginine 143. Serine 164 and lysine 169 together coordinate GTP.

It belongs to the GTP cyclohydrolase II family. It depends on Zn(2+) as a cofactor.

It carries out the reaction GTP + 4 H2O = 2,5-diamino-6-hydroxy-4-(5-phosphoribosylamino)-pyrimidine + formate + 2 phosphate + 3 H(+). It functions in the pathway cofactor biosynthesis; riboflavin biosynthesis; 5-amino-6-(D-ribitylamino)uracil from GTP: step 1/4. Functionally, catalyzes the conversion of GTP to 2,5-diamino-6-ribosylamino-4(3H)-pyrimidinone 5'-phosphate (DARP), formate and pyrophosphate. This Streptomyces coelicolor (strain ATCC BAA-471 / A3(2) / M145) protein is GTP cyclohydrolase-2.